Here is a 346-residue protein sequence, read N- to C-terminus: D-alanine--D-alanine ligase (346 aa).

The region spanning 125-325 (KRIWRSEGLP…YPALCLEVLR (201 aa)) is the ATP-grasp domain. Residue 151-206 (FAALGSPMIVKPDREGSTIGLTKVTQIEQCGAAYALAARHDAMVLCEQFVKGDEVT) participates in ATP binding. Asp-278, Glu-292, and Asn-294 together coordinate Mg(2+).

Belongs to the D-alanine--D-alanine ligase family. Mg(2+) is required as a cofactor. The cofactor is Mn(2+).

The protein resides in the cytoplasm. It carries out the reaction 2 D-alanine + ATP = D-alanyl-D-alanine + ADP + phosphate + H(+). It functions in the pathway cell wall biogenesis; peptidoglycan biosynthesis. In terms of biological role, cell wall formation. The chain is D-alanine--D-alanine ligase from Albidiferax ferrireducens (strain ATCC BAA-621 / DSM 15236 / T118) (Rhodoferax ferrireducens).